The sequence spans 876 residues: Leucine--tRNA ligase (876 aa).

Residues 43-53 carry the 'HIGH' region motif; that stretch reads PYPSGRIHMGH. The short motif at 632-636 is the 'KMSKS' region element; that stretch reads KMSKS. K635 provides a ligand contact to ATP.

This sequence belongs to the class-I aminoacyl-tRNA synthetase family.

The protein localises to the cytoplasm. It catalyses the reaction tRNA(Leu) + L-leucine + ATP = L-leucyl-tRNA(Leu) + AMP + diphosphate. In Rhizobium etli (strain ATCC 51251 / DSM 11541 / JCM 21823 / NBRC 15573 / CFN 42), this protein is Leucine--tRNA ligase.